The sequence spans 135 residues: Small ribosomal subunit protein uS12 (135 aa).

Asp-89 is modified (3-methylthioaspartic acid). The interval 108–135 is disordered; it reads NKRTVSRSKYGTKKAKATDKKATDSKKK. A compositionally biased stretch (basic residues) spans 111–122; it reads TVSRSKYGTKKA. Over residues 123–135 the composition is skewed to basic and acidic residues; sequence KATDKKATDSKKK.

Belongs to the universal ribosomal protein uS12 family. Part of the 30S ribosomal subunit. Contacts proteins S8 and S17. May interact with IF1 in the 30S initiation complex.

Its function is as follows. With S4 and S5 plays an important role in translational accuracy. Interacts with and stabilizes bases of the 16S rRNA that are involved in tRNA selection in the A site and with the mRNA backbone. Located at the interface of the 30S and 50S subunits, it traverses the body of the 30S subunit contacting proteins on the other side and probably holding the rRNA structure together. The combined cluster of proteins S8, S12 and S17 appears to hold together the shoulder and platform of the 30S subunit. The polypeptide is Small ribosomal subunit protein uS12 (Helicobacter pylori (strain HPAG1)).